The sequence spans 302 residues: Sulfate adenylyltransferase subunit 2 (302 aa).

Belongs to the PAPS reductase family. CysD subfamily. Heterodimer composed of CysD, the smaller subunit, and CysN.

It carries out the reaction sulfate + ATP + H(+) = adenosine 5'-phosphosulfate + diphosphate. The protein operates within sulfur metabolism; hydrogen sulfide biosynthesis; sulfite from sulfate: step 1/3. Its function is as follows. With CysN forms the ATP sulfurylase (ATPS) that catalyzes the adenylation of sulfate producing adenosine 5'-phosphosulfate (APS) and diphosphate, the first enzymatic step in sulfur assimilation pathway. APS synthesis involves the formation of a high-energy phosphoric-sulfuric acid anhydride bond driven by GTP hydrolysis by CysN coupled to ATP hydrolysis by CysD. The sequence is that of Sulfate adenylyltransferase subunit 2 from Klebsiella pneumoniae (strain 342).